The following is a 344-amino-acid chain: Nuclear distribution protein nudE-like 1-A (344 aa).

Positions Y26–R187 form a coiled coil. Positions L181–V190 are enriched in basic and acidic residues. Disordered regions lie at residues L181–A209 and P322–V344.

It belongs to the nudE family. Phosphorylated in mitosis.

The protein localises to the cytoplasm. It localises to the cytoskeleton. Its subcellular location is the microtubule organizing center. It is found in the centrosome. The protein resides in the spindle. In terms of biological role, required for organization of the cellular microtubule array and microtubule anchoring at the centrosome. Positively regulates the activity of the minus-end directed microtubule motor protein dynein. May enhance dynein-mediated microtubule sliding by targeting dynein to the microtubule plus end. This chain is Nuclear distribution protein nudE-like 1-A (ndel1a), found in Danio rerio (Zebrafish).